The sequence spans 264 residues: Phosphoribosylaminoimidazole-succinocarboxamide synthase (264 aa).

The protein belongs to the SAICAR synthetase family.

The catalysed reaction is 5-amino-1-(5-phospho-D-ribosyl)imidazole-4-carboxylate + L-aspartate + ATP = (2S)-2-[5-amino-1-(5-phospho-beta-D-ribosyl)imidazole-4-carboxamido]succinate + ADP + phosphate + 2 H(+). It participates in purine metabolism; IMP biosynthesis via de novo pathway; 5-amino-1-(5-phospho-D-ribosyl)imidazole-4-carboxamide from 5-amino-1-(5-phospho-D-ribosyl)imidazole-4-carboxylate: step 1/2. The sequence is that of Phosphoribosylaminoimidazole-succinocarboxamide synthase (purC) from Synechocystis sp. (strain ATCC 27184 / PCC 6803 / Kazusa).